The chain runs to 455 residues: UDP-N-acetylmuramoylalanine--D-glutamate ligase (455 aa).

118-124 contacts ATP; the sequence is GTNGKST.

Belongs to the MurCDEF family.

Its subcellular location is the cytoplasm. It catalyses the reaction UDP-N-acetyl-alpha-D-muramoyl-L-alanine + D-glutamate + ATP = UDP-N-acetyl-alpha-D-muramoyl-L-alanyl-D-glutamate + ADP + phosphate + H(+). It functions in the pathway cell wall biogenesis; peptidoglycan biosynthesis. Cell wall formation. Catalyzes the addition of glutamate to the nucleotide precursor UDP-N-acetylmuramoyl-L-alanine (UMA). This Myxococcus xanthus (strain DK1622) protein is UDP-N-acetylmuramoylalanine--D-glutamate ligase.